A 201-amino-acid polypeptide reads, in one-letter code: Small ribosomal subunit protein uS4c (201 aa).

A disordered region spans residues 20 to 43 (GLTSKRPRAGSDLRNQSRSGKRSQ). The S4 RNA-binding domain maps to 89-149 (MRLDNILFRL…NEQKSRALIQ (61 aa)).

The protein belongs to the universal ribosomal protein uS4 family. Part of the 30S ribosomal subunit. Contacts protein S5. The interaction surface between S4 and S5 is involved in control of translational fidelity.

The protein resides in the plastid. Its subcellular location is the chloroplast. Its function is as follows. One of the primary rRNA binding proteins, it binds directly to 16S rRNA where it nucleates assembly of the body of the 30S subunit. With S5 and S12 plays an important role in translational accuracy. The sequence is that of Small ribosomal subunit protein uS4c (rps4) from Vitis vinifera (Grape).